The sequence spans 273 residues: MAFGVEPPEHVTPWFKPVYEATFQFGGVAWTLCYILIAREGMRTKSYGMPLFALANNFAWEMVYALWVVDNAFEKTAMTIWMLIDTPIIYSILKHGVLEWQHAPMVSRNLKSILVGLIALCAAAHWSWQSWWIGNEMGKRDDLEGADLTQMAYWAVSMCQFLVSTMSLAMLCVRGHSGGVSWMIWLSRFLGTLIGLNMNYAWAYYTWPEAHEYFMSAPAVFVWGVTTVCDIIYGFVLYHVKSNERELSDGRKVAAEADDEQVGGWSKMKTGKN.

A run of 7 helical transmembrane segments spans residues 18-38, 49-69, 78-98, 113-133, 153-173, 178-198, and 217-237; these read VYEA…ILIA, MPLF…LWVV, MTIW…HGVL, ILVG…SWWI, YWAV…MLCV, GGVS…GLNM, and APAV…GFVL.

It belongs to the paxB family.

It is found in the membrane. The catalysed reaction is ilicicolin A epoxide = ilicicolin C. The protein operates within secondary metabolite biosynthesis; terpenoid biosynthesis. Its function is as follows. Terpene cyclase; part of the asc-1 gene cluster that mediates the biosynthesis of both ascochlorin and ascofuranone, a strong inhibitor of cyanide-insensitive alternative oxidases and a promising drug candidate against African trypanosomiasis. The first step in the pathway is performed by the non-reducing polyketide synthase ascC that produces orsellinic acid by condensing acetyl-CoA with 3 malonyl-CoA units. Orsellinic acid is then prenylated by the prenyltransferase ascA to yield ilicicolinic acid B. Ilicicolinic acid B is further reduced to ilicicolin B by the reductase ascB. The halogenase ascD then chlorinates ilicicolin B to produce ilicicolin A which is converted to ilicicolin A epoxide by the cytochrome P450 monooxygenase ascE that catalyzes stereoselective epoxidation of the terminal double bond of the prenyl group. Ilicicolin A epoxide is the last common precursor for the biosynthesis of ascofuranone and ascochlorin. The terpene cyclase ascF produces a monocyclic terpene, and the cyclization reaction is proposed to be initiated by protonation of the terminal epoxide of ilicicolin A epoxide to generate a monocyclic tertiarycation, which is followed by a series of hydride and methyl shifts with abstraction of proton, leading to the formation of the (14S,15R,19R)-trimethylcyclohexanone ring structure of ilicicolin C, which is finally reduced to ascochlorin by the dehydrogenase ascG. On the other hand, ilicicolin A epoxide is hydroxylated by the cytochrome P450 monooxygenase ascH, and the resultant product is cyclized by the terpene cyclase ascI to ascofuranol via protonation-initiated epoxide ring opening, which facilitates the 6-endo-tet cyclization to form the tetrahy-drofuran ring. Finally, ascofuranol is oxidized into ascofuranone by ascJ. The chain is Terpene cyclase ascF from Acremonium egyptiacum (Oospora egyptiaca).